A 59-amino-acid polypeptide reads, in one-letter code: Large ribosomal subunit protein bL32 (59 aa).

Residues Met1–Asp20 form a disordered region. Residues Lys7 to His19 show a composition bias toward basic residues.

The protein belongs to the bacterial ribosomal protein bL32 family.

This Wigglesworthia glossinidia brevipalpis protein is Large ribosomal subunit protein bL32.